A 478-amino-acid chain; its full sequence is MKSYQGLADKWIKGSGEEYLDINPADKDHVLAKIRLYTKDDVKEAINKAVAKFDEWSRTPAPKRGSILLKAGELMEQEAQEFALLMTLEEGKTLKDSMFEVTRSYNLLKFYGALAFKISGKTLPSADPNTRIFTVKEPLGVVALITPWNFPLSIPVWKLAPALAAGNTAVIKPATKTPLMVAKLVEVLSKAGLPEGVVNLVVGKGSEVGDTIVSDDNIAAVSFTGSTEVGKRIYKLVGNKNRMTRIQLELGGKNALYVDKSADLTLAAELAVRGGFGLTGQSCTATSRLIINKDVYTQFKQRLLERVKKWRVGPGTEDVDMGPVVDEGQFKKDLEYIEYGKNVGAKLIYGGNIIPGKGYFLEPTIFEGVTSDMRLFKEEIFGPVLSVTEAKDLDEAIRLVNAVDYGHTAGIVASDIKAINEFVSRVEAGVIKVNKPTVGLELQAPFGGFKNSGATTWKEMGEDALEFYLKEKTVYEGW.

Residues 148-149 (WN), 172-175 (KPAT), and 225-226 (GS) contribute to the NADP(+) site. The Proton acceptor role is filled by glutamate 249. Catalysis depends on cysteine 283, which acts as the Nucleophile. Glutamate 379 contributes to the NADP(+) binding site.

This sequence belongs to the aldehyde dehydrogenase family. Homotetramer.

The catalysed reaction is 2,5-dioxopentanoate + NADP(+) + H2O = 2-oxoglutarate + NADPH + 2 H(+). Functionally, 2,5-dioxopentanoate dehydrogenase involved in the degradation of pentoses such as D-arabinose or D-xylose, a major component of hemicelluloses such as xylan. Catalyzes the fifth reaction in the pentose utilization pathway through dehydratation of 2,5-dioxopentanoate into 2-oxoglutarate. Also shows dehydrogenase activity toward glycolaldehyde and DL-glyceraldehyde. This chain is 2,5-dioxopentanoate dehydrogenase, found in Saccharolobus solfataricus (strain ATCC 35092 / DSM 1617 / JCM 11322 / P2) (Sulfolobus solfataricus).